A 584-amino-acid chain; its full sequence is Alpha-glucosidase MAL32 (584 aa).

The active-site Nucleophile is Asp214. The active-site Proton donor is the Glu276.

Belongs to the glycosyl hydrolase 13 family.

It catalyses the reaction Hydrolysis of terminal, non-reducing (1-&gt;4)-linked alpha-D-glucose residues with release of alpha-D-glucose.. The protein is Alpha-glucosidase MAL32 (MAL32) of Saccharomyces cerevisiae (strain ATCC 204508 / S288c) (Baker's yeast).